We begin with the raw amino-acid sequence, 319 residues long: ATP-dependent 6-phosphofructokinase (319 aa).

Gly11 is a binding site for ATP. 21–25 serves as a coordination point for ADP; that stretch reads RAVVR. ATP contacts are provided by residues 72 to 73 and 102 to 105; these read RC and GDGS. Asp103 provides a ligand contact to Mg(2+). 125–127 serves as a coordination point for substrate; the sequence is TID. Asp127 serves as the catalytic Proton acceptor. Arg154 provides a ligand contact to ADP. Substrate-binding positions include Arg162 and 169-171; that span reads MGR. ADP contacts are provided by residues 185-187, Arg211, and 213-215; these read GAE and KKH. Substrate-binding positions include Glu222, Arg243, and 249–252; that span reads HVQR.

The protein belongs to the phosphofructokinase type A (PFKA) family. ATP-dependent PFK group I subfamily. Prokaryotic clade 'B1' sub-subfamily. In terms of assembly, homotetramer. Mg(2+) is required as a cofactor.

It is found in the cytoplasm. The enzyme catalyses beta-D-fructose 6-phosphate + ATP = beta-D-fructose 1,6-bisphosphate + ADP + H(+). Its pathway is carbohydrate degradation; glycolysis; D-glyceraldehyde 3-phosphate and glycerone phosphate from D-glucose: step 3/4. Its activity is regulated as follows. Allosterically activated by ADP and other diphosphonucleosides, and allosterically inhibited by phosphoenolpyruvate. Its function is as follows. Catalyzes the phosphorylation of D-fructose 6-phosphate to fructose 1,6-bisphosphate by ATP, the first committing step of glycolysis. The polypeptide is ATP-dependent 6-phosphofructokinase (Bacillus cytotoxicus (strain DSM 22905 / CIP 110041 / 391-98 / NVH 391-98)).